The sequence spans 483 residues: Zinc metalloproteinase/disintegrin (483 aa).

Residues 1–20 form the signal peptide; sequence MIQVLLVTVCLAVFPYQGSS. The propeptide occupies 21 to 190; the sequence is IILESGNVND…KASQLYLTPE (170 aa). The 199-residue stretch at 197-395 folds into the Peptidase M12B domain; that stretch reads RYVKLAIVVD…YKPQCILNAP (199 aa). 3 disulfide bridges follow: cysteine 308/cysteine 390, cysteine 352/cysteine 374, and cysteine 354/cysteine 357. Histidine 333 provides a ligand contact to Zn(2+). Residue glutamate 334 is part of the active site. Residues histidine 337 and histidine 343 each contribute to the Zn(2+) site. Residues 396-411 constitute a propeptide that is removed on maturation; sequence LRTDTVSTPVSGNELL. The Disintegrin domain maps to 403–483; sequence TPVSGNELLE…SDDCPRWNDL (81 aa). 6 cysteine pairs are disulfide-bonded: cysteine 417–cysteine 432, cysteine 419–cysteine 427, cysteine 426–cysteine 449, cysteine 440–cysteine 446, cysteine 445–cysteine 470, and cysteine 458–cysteine 477. A Cell attachment site motif is present at residues 462 to 464; that stretch reads RGD.

This sequence belongs to the venom metalloproteinase (M12B) family. P-II subfamily. P-IIa sub-subfamily. In terms of assembly, monomer. The cofactor is Zn(2+). As to expression, expressed by the venom gland.

The protein resides in the secreted. Functionally, impairs hemostasis in the envenomed animal. Its function is as follows. Inhibits ADP- and collagen-induced human platelet aggregation with IC(50) of 123 and 135 nM, respectively. Inhibits sperm-egg binding in a concentration-dependent manner, but has no effect on the fusion of sperm-egg. In Protobothrops jerdonii (Jerdon's pitviper), this protein is Zinc metalloproteinase/disintegrin.